Reading from the N-terminus, the 596-residue chain is Protein FlbA (596 aa).

TPR repeat units follow at residues 91–124 (GLAWHILAIAREKTGDFASSLRAYEAALALLPDH), 159–192 (VEGANNLACALRELNRESEAIEVLKAALGANPEA), 193–226 (AVLWNTLGTVLCNIGDAAGSIVFFDESLRLAPDF), and 228–260 (KAYHNRAFARLDLGEIEAALADCEAAMRSPGSP).

The protein is Protein FlbA (flbA) of Caulobacter vibrioides (strain ATCC 19089 / CIP 103742 / CB 15) (Caulobacter crescentus).